We begin with the raw amino-acid sequence, 220 residues long: tRNA (guanine-N(7)-)-methyltransferase (220 aa).

S-adenosyl-L-methionine contacts are provided by Glu-44, Glu-69, Asn-96, and Asp-118. Residue Asp-118 is part of the active site. Lys-122 contributes to the substrate binding site. An interaction with RNA region spans residues 124 to 129 (RHEKRR). Substrate is bound by residues Asp-154 and 191-194 (TEYE).

Belongs to the class I-like SAM-binding methyltransferase superfamily. TrmB family.

It catalyses the reaction guanosine(46) in tRNA + S-adenosyl-L-methionine = N(7)-methylguanosine(46) in tRNA + S-adenosyl-L-homocysteine. Its pathway is tRNA modification; N(7)-methylguanine-tRNA biosynthesis. In terms of biological role, catalyzes the formation of N(7)-methylguanine at position 46 (m7G46) in tRNA. This chain is tRNA (guanine-N(7)-)-methyltransferase, found in Geobacillus sp. (strain WCH70).